Reading from the N-terminus, the 340-residue chain is Myb-related protein Zm1 (340 aa).

HTH myb-type domains are found at residues 11 to 63 and 64 to 118; these read KVGL…INYL and RPDL…KKKV. 2 consecutive DNA-binding regions (H-T-H motif) follow at residues 39-63 and 91-114; these read WRAL…INYL and WSKI…NTHL. A compositionally biased stretch (basic residues) spans 116-126; it reads KKVAQREKKKA. 2 disordered regions span residues 116–173 and 190–209; these read KKVA…DATD and DGAP…SSLT. Over residues 133–166 the composition is skewed to low complexity; sequence AGTPATAPLSSATSSTTTHNSSGGSDSGDQCGTS.

Its subcellular location is the nucleus. Its function is as follows. Transcription factor that positively regulates genes involved in anthocyanin biosynthesis such as A1. This Zea mays (Maize) protein is Myb-related protein Zm1.